A 122-amino-acid polypeptide reads, in one-letter code: Small ribosomal subunit protein uS13 (122 aa).

Positions 99-122 (RGQRTHTNARTRKGPAKAIAGKKK) are disordered.

It belongs to the universal ribosomal protein uS13 family. As to quaternary structure, part of the 30S ribosomal subunit. Forms a loose heterodimer with protein S19. Forms two bridges to the 50S subunit in the 70S ribosome.

Its function is as follows. Located at the top of the head of the 30S subunit, it contacts several helices of the 16S rRNA. In the 70S ribosome it contacts the 23S rRNA (bridge B1a) and protein L5 of the 50S subunit (bridge B1b), connecting the 2 subunits; these bridges are implicated in subunit movement. Contacts the tRNAs in the A and P-sites. The protein is Small ribosomal subunit protein uS13 of Agrobacterium fabrum (strain C58 / ATCC 33970) (Agrobacterium tumefaciens (strain C58)).